The sequence spans 951 residues: Serine/threonine-protein kinase ATG1 (951 aa).

Residues 22-327 (FTINEEIGKG…FPEYFAHPVV (306 aa)) form the Protein kinase domain. ATP-binding positions include 28 to 36 (IGKGSFATV) and Lys-51. Catalysis depends on Asp-165, which acts as the Proton acceptor. Disordered stretches follow at residues 343-375 (IITP…PVET), 387-458 (EQAP…YDEQ), 514-573 (HIPK…SSPS), and 924-951 (HQSM…TPPH). Composition is skewed to basic and acidic residues over residues 359–368 (SLRERQRENP) and 432–442 (PRQRDRTERHY). Composition is skewed to polar residues over residues 547-573 (AQGN…SSPS) and 939-951 (GGTT…TPPH).

The protein belongs to the protein kinase superfamily. Ser/Thr protein kinase family. APG1/unc-51/ULK1 subfamily. In terms of assembly, homodimer. Forms a ternary complex with ATG13 and ATG17.

It is found in the cytoplasm. The protein resides in the preautophagosomal structure membrane. The enzyme catalyses L-seryl-[protein] + ATP = O-phospho-L-seryl-[protein] + ADP + H(+). The catalysed reaction is L-threonyl-[protein] + ATP = O-phospho-L-threonyl-[protein] + ADP + H(+). Its function is as follows. Serine/threonine protein kinase involved in the cytoplasm to vacuole transport (Cvt) and found to be essential in autophagy, where it is required for the formation of autophagosomes. Involved in the clearance of protein aggregates which cannot be efficiently cleared by the proteasome. Required for selective autophagic degradation of the nucleus (nucleophagy) as well as for mitophagy which contributes to regulate mitochondrial quantity and quality by eliminating the mitochondria to a basal level to fulfill cellular energy requirements and preventing excess ROS production. Also involved in endoplasmic reticulum-specific autophagic process, in selective removal of ER-associated degradation (ERAD) substrates. Plays a key role in ATG9 and ATG23 cycling through the pre-autophagosomal structure and is necessary to promote ATG18 binding to ATG9 through phosphorylation of ATG9. Catalyzes phosphorylation of ATG4, decreasing the interaction between ATG4 and ATG8 and impairing deconjugation of PE-conjugated forms of ATG8. The polypeptide is Serine/threonine-protein kinase ATG1 (Sclerotinia sclerotiorum (strain ATCC 18683 / 1980 / Ss-1) (White mold)).